We begin with the raw amino-acid sequence, 157 residues long: Transcription elongation factor GreA (157 aa).

The interval 1 to 24 (MDKFPMTPEGYHALDEELKRRQQE) is disordered. Residues 12 to 24 (HALDEELKRRQQE) are compositionally biased toward basic and acidic residues. Residues 53–73 (EAQSLNEGRIAELEDKLSRAE) are a coiled coil.

It belongs to the GreA/GreB family.

In terms of biological role, necessary for efficient RNA polymerase transcription elongation past template-encoded arresting sites. The arresting sites in DNA have the property of trapping a certain fraction of elongating RNA polymerases that pass through, resulting in locked ternary complexes. Cleavage of the nascent transcript by cleavage factors such as GreA or GreB allows the resumption of elongation from the new 3'terminus. GreA releases sequences of 2 to 3 nucleotides. In Beijerinckia indica subsp. indica (strain ATCC 9039 / DSM 1715 / NCIMB 8712), this protein is Transcription elongation factor GreA.